The following is a 138-amino-acid chain: uncharacterized protein (138 aa).

Residues 9-133 (EDEWKKELGP…NSASLEFHNE (125 aa)) enclose the MsrB domain. 4 residues coordinate Zn(2+): Cys49, Cys52, Cys97, and Cys100. Cys122 (nucleophile) is an active-site residue.

It belongs to the MsrB Met sulfoxide reductase family. The cofactor is Zn(2+).

Its subcellular location is the cytoplasm. The protein localises to the nucleus. This is an uncharacterized protein from Schizosaccharomyces pombe (strain 972 / ATCC 24843) (Fission yeast).